The chain runs to 271 residues: DNA-directed RNA polymerase subunit Rpo3 (271 aa).

This sequence belongs to the archaeal Rpo3/eukaryotic RPB3 RNA polymerase subunit family. Part of the RNA polymerase complex.

The protein localises to the cytoplasm. It carries out the reaction RNA(n) + a ribonucleoside 5'-triphosphate = RNA(n+1) + diphosphate. DNA-dependent RNA polymerase (RNAP) catalyzes the transcription of DNA into RNA using the four ribonucleoside triphosphates as substrates. This Picrophilus torridus (strain ATCC 700027 / DSM 9790 / JCM 10055 / NBRC 100828 / KAW 2/3) protein is DNA-directed RNA polymerase subunit Rpo3.